The following is a 336-amino-acid chain: tRNA-cytidine(32) 2-sulfurtransferase (336 aa).

The segment at 1-34 (MNAPEILNGAATASPADATEATQTAARAKTPLTR) is disordered. Residues 10 to 22 (AATASPADATEAT) are compositionally biased toward low complexity. The PP-loop motif motif lies at 75-80 (SGGKDS). Residues Cys-150, Cys-153, and Cys-241 each coordinate [4Fe-4S] cluster.

This sequence belongs to the TtcA family. In terms of assembly, homodimer. It depends on Mg(2+) as a cofactor. [4Fe-4S] cluster is required as a cofactor.

Its subcellular location is the cytoplasm. The enzyme catalyses cytidine(32) in tRNA + S-sulfanyl-L-cysteinyl-[cysteine desulfurase] + AH2 + ATP = 2-thiocytidine(32) in tRNA + L-cysteinyl-[cysteine desulfurase] + A + AMP + diphosphate + H(+). It functions in the pathway tRNA modification. Its function is as follows. Catalyzes the ATP-dependent 2-thiolation of cytidine in position 32 of tRNA, to form 2-thiocytidine (s(2)C32). The sulfur atoms are provided by the cysteine/cysteine desulfurase (IscS) system. This Paraburkholderia phytofirmans (strain DSM 17436 / LMG 22146 / PsJN) (Burkholderia phytofirmans) protein is tRNA-cytidine(32) 2-sulfurtransferase.